A 152-amino-acid chain; its full sequence is Alpha-amylase inhibitor BDAI-1 (152 aa).

A signal peptide spans 1–30; it reads MGAMWMKSMLLVLLLCMLMVTPMTGARSDN.

It belongs to the protease inhibitor I6 (cereal trypsin/alpha-amylase inhibitor) family. In terms of assembly, homodimer. Five disulfide bonds, which are essential for the inhibitor activity, are probably present. As to expression, endosperm.

The protein resides in the secreted. Its function is as follows. Could be involved in insect defense mechanisms. Inhibits insect-type alpha-amylase. The sequence is that of Alpha-amylase inhibitor BDAI-1 (IAD1) from Hordeum vulgare (Barley).